The primary structure comprises 185 residues: FK506-binding protein 2 (185 aa).

Residues 1–20 form the signal peptide; sequence MQGLLLSLSLLASAAVGVLA. In terms of domain architecture, PPIase FKBP-type spans 41-129; sequence GDKINVHYKG…VFETELVGIE (89 aa). A Prevents secretion from ER motif is present at residues 182-185; that stretch reads HNEL.

Belongs to the FKBP-type PPIase family. FKBP2 subfamily.

It is found in the endoplasmic reticulum. The enzyme catalyses [protein]-peptidylproline (omega=180) = [protein]-peptidylproline (omega=0). Inhibited by both FK506 and rapamycin. Its function is as follows. PPIases accelerate the folding of proteins. It catalyzes the cis-trans isomerization of proline imidic peptide bonds in oligopeptides. The polypeptide is FK506-binding protein 2 (FPR2) (Podospora anserina (Pleurage anserina)).